Consider the following 263-residue polypeptide: Sulfur carrier protein FdhD (263 aa).

Cys107 serves as the catalytic Cysteine persulfide intermediate.

It belongs to the FdhD family.

It localises to the cytoplasm. In terms of biological role, required for formate dehydrogenase (FDH) activity. Acts as a sulfur carrier protein that transfers sulfur from IscS to the molybdenum cofactor prior to its insertion into FDH. The protein is Sulfur carrier protein FdhD of Bacillus licheniformis (strain ATCC 14580 / DSM 13 / JCM 2505 / CCUG 7422 / NBRC 12200 / NCIMB 9375 / NCTC 10341 / NRRL NRS-1264 / Gibson 46).